The primary structure comprises 479 residues: MDETSPLVSPERAQPPDYTFPSGSGAHFPQVPGGAVRVAAAAGSGPSPPGSPGHDRERQPLLDRARGAAAQGQTQTVAAQAQALAAQAAAAAHAAQAHRERNEFPEDPEFEAVVRQAELAIERCIFPERIYQGSSGSYFVKDPQGRIIAVFKPKNEEPYGHLNPKWTKWLQKLCCPCCFGRDCLVLNQGYLSEAGASLVDQKLELNIVPRTKVVYLASETFNYSAIDRVKSRGKRLALEKVPKVGQRFNRIGLPPKVGSFQLFVEGYKDADYWLRRFEAEPLPENTNRQLLLQFERLVVLDYIIRNTDRGNDNWLIKYDCPMDSSSSRDTDWVVVKEPVIKVAAIDNGLAFPLKHPDSWRAYPFYWAWLPQAKVPFSQEIKDLILPKISDPNFVKDLEEDLYELFKKDPGFDRGQFHKQIAVMRGQILNLTQALKDNKSPLHLVQMPPVIVETARSHQRSSSESYTQSFQSRKPFFSWW.

N-acetylmethionine is present on Met1. The disordered stretch occupies residues 1–74 (MDETSPLVSP…ARGAAAQGQT (74 aa)). Phosphoserine is present on residues Ser5, Ser9, Ser44, Ser47, and Ser51. Residues 31 to 45 (VPGGAVRVAAAAGSG) are compositionally biased toward low complexity. Residues 53 to 66 (GHDRERQPLLDRAR) show a composition bias toward basic and acidic residues. Residues 124 to 453 (CIFPERIYQG…VQMPPVIVET (330 aa)) enclose the PI3K/PI4K catalytic domain. A G-loop region spans residues 130–136 (IYQGSSG). Residues 131 to 137 (YQGSSGS) and Lys152 each bind ATP. The tract at residues 157–159 (EPY) is important for substrate binding. Residues 165–178 (KWTKWLQKLCCPCC) are important for interaction with membranes. 4 S-palmitoyl cysteine lipidation sites follow: Cys174, Cys175, Cys177, and Cys178. 261–264 (QLFV) contributes to the ATP binding site. The interval 268-276 (KDADYWLRR) is important for interaction with membranes. Positions 305–313 (RNTDRGNDN) are catalytic loop. The tract at residues 344–364 (AIDNGLAFPLKHPDSWRAYPF) is activation loop. Position 346 (Asp346) interacts with ATP. The segment at 359–368 (WRAYPFYWAW) is important for interaction with membranes. Ser462 bears the Phosphoserine mark.

Belongs to the PI3/PI4-kinase family. Type II PI4K subfamily. Associates with the BLOC-1 and the AP-3 complexes; the BLOC-1 complex is required for optimal binding of PI4K2A to the AP-3 complex. Interacts with BLOC1S5 and DTNBP1. Interacts with FOS; this interaction may enhance phosphatidylinositol phosphorylation activity. Interacts with ITCH. Interacts with ATG9A. Palmitoylated by ZDHHC3 and ZDHHC7 in the CCPCC motif. Palmitoylation is cholesterol-dependent, and required for TGN localization. Post-translationally, ubiquitinated by ITCH; this does not lead to proteasomal degradation. In terms of tissue distribution, widely expressed. Highest expression is observed in kidney, brain, heart, skeletal muscle, and placenta and lowest expression is observed in colon, thymus, and small intestine.

It is found in the golgi apparatus. Its subcellular location is the trans-Golgi network membrane. It localises to the membrane raft. The protein resides in the cell projection. The protein localises to the dendrite. It is found in the presynaptic cell membrane. Its subcellular location is the synapse. It localises to the synaptosome. The protein resides in the mitochondrion. The protein localises to the endosome. It is found in the endosome membrane. Its subcellular location is the cytoplasmic vesicle. It localises to the membrane. The protein resides in the cell membrane. The protein localises to the perikaryon. It is found in the neuron projection. It catalyses the reaction a 1,2-diacyl-sn-glycero-3-phospho-(1D-myo-inositol) + ATP = a 1,2-diacyl-sn-glycero-3-phospho-(1D-myo-inositol 4-phosphate) + ADP + H(+). Its function is as follows. Membrane-bound phosphatidylinositol-4 kinase (PI4-kinase) that catalyzes the phosphorylation of phosphatidylinositol (PI) to phosphatidylinositol 4-phosphate (PI4P), a lipid that plays important roles in endocytosis, Golgi function, protein sorting and membrane trafficking and is required for prolonged survival of neurons. Besides, phosphorylation of phosphatidylinositol (PI) to phosphatidylinositol 4-phosphate (PI4P) is the first committed step in the generation of phosphatidylinositol 4,5-bisphosphate (PIP2), a precursor of the second messenger inositol 1,4,5-trisphosphate (InsP3). This chain is Phosphatidylinositol 4-kinase type 2-alpha (PI4K2A), found in Homo sapiens (Human).